The sequence spans 466 residues: 3-isopropylmalate dehydratase large subunit (466 aa).

The [4Fe-4S] cluster site is built by cysteine 347, cysteine 407, and cysteine 410.

The protein belongs to the aconitase/IPM isomerase family. LeuC type 1 subfamily. As to quaternary structure, heterodimer of LeuC and LeuD. Requires [4Fe-4S] cluster as cofactor.

It carries out the reaction (2R,3S)-3-isopropylmalate = (2S)-2-isopropylmalate. Its pathway is amino-acid biosynthesis; L-leucine biosynthesis; L-leucine from 3-methyl-2-oxobutanoate: step 2/4. Functionally, catalyzes the isomerization between 2-isopropylmalate and 3-isopropylmalate, via the formation of 2-isopropylmaleate. This is 3-isopropylmalate dehydratase large subunit from Vibrio campbellii (strain ATCC BAA-1116).